We begin with the raw amino-acid sequence, 616 residues long: MLRTIVPARLEFRDGVPYSAAYGDVYHSADGGPGQARHVFLAGCGLPAAWAGRDSFVVLETGFGTGLNFLATWAAWRDDPARPSRLHFLSVEKHPFQAADLARIHAQWPEFAELSEVLRGNWPMLLPGFHRVALDGGRVQLTLMLGEAAECLHEVEARVDAFYLDGFAPDRNTDLWQPQLFETLAWLANPGATAATYTVAAPVLQGLTQAGFACEKRRGYGRKRHCMSARFAGRSRAEVSAAPRHVAVIGGGVAGAAAARALVDRGVSVTLLERATAPAEGASGNPVAVFRPLISRDDNRATRLTRAAFLHDLRAWAALGECVQWARCGVLHLARDAATAAKQQQALAEIALPADYARWVDLGEARELAHWSVAAPGTFYSAAGWVVPGSLCRAWLDHPGIGLQTNRAVGRLQAVSNGWQILDREGHALAEADAVVLANARDASRLALGQAWPLHTVRGQVTQLPAGSLPEIARVIAREGYVAPGAAGPLVGATYEHPEGYKENDDDTAPRAASDVANLARLEAILPGATQRFVSNEVSGRASLRATLPDRLPLVGAVDGQPGLYVAAGYASRGVVWAGLLGEALADLITGQPLPLEAELMRGIAPARFAGNRKTA.

The segment at 1–232 (MLRTIVPARL…KRHCMSARFA (232 aa)) is tRNA (mnm(5)s(2)U34)-methyltransferase. Residues 249 to 616 (IGGGVAGAAA…ARFAGNRKTA (368 aa)) form an FAD-dependent cmnm(5)s(2)U34 oxidoreductase region.

It in the N-terminal section; belongs to the methyltransferase superfamily. tRNA (mnm(5)s(2)U34)-methyltransferase family. The protein in the C-terminal section; belongs to the DAO family. FAD is required as a cofactor.

It localises to the cytoplasm. The enzyme catalyses 5-aminomethyl-2-thiouridine(34) in tRNA + S-adenosyl-L-methionine = 5-methylaminomethyl-2-thiouridine(34) in tRNA + S-adenosyl-L-homocysteine + H(+). Functionally, catalyzes the last two steps in the biosynthesis of 5-methylaminomethyl-2-thiouridine (mnm(5)s(2)U) at the wobble position (U34) in tRNA. Catalyzes the FAD-dependent demodification of cmnm(5)s(2)U34 to nm(5)s(2)U34, followed by the transfer of a methyl group from S-adenosyl-L-methionine to nm(5)s(2)U34, to form mnm(5)s(2)U34. The polypeptide is tRNA 5-methylaminomethyl-2-thiouridine biosynthesis bifunctional protein MnmC (Thiobacillus denitrificans (strain ATCC 25259 / T1)).